Consider the following 496-residue polypeptide: Alanine aminotransferase 1 (496 aa).

Alanine 2 bears the N-acetylalanine mark. Threonine 22 is subject to Phosphothreonine. Residue lysine 314 is modified to N6-(pyridoxal phosphate)lysine.

The protein belongs to the class-I pyridoxal-phosphate-dependent aminotransferase family. Alanine aminotransferase subfamily. Homodimer. Requires pyridoxal 5'-phosphate as cofactor. As to expression, liver, kidney, heart, and skeletal muscles. Expressed at moderate levels in the adipose tissue.

The protein resides in the cytoplasm. The catalysed reaction is L-alanine + 2-oxoglutarate = pyruvate + L-glutamate. It functions in the pathway amino-acid degradation; L-alanine degradation via transaminase pathway; pyruvate from L-alanine: step 1/1. In terms of biological role, catalyzes the reversible transamination between alanine and 2-oxoglutarate to form pyruvate and glutamate. Participates in cellular nitrogen metabolism and also in liver gluconeogenesis starting with precursors transported from skeletal muscles. This chain is Alanine aminotransferase 1 (GPT), found in Homo sapiens (Human).